Here is a 698-residue protein sequence, read N- to C-terminus: Polyribonucleotide nucleotidyltransferase (698 aa).

Residues Asp-487 and Asp-493 each contribute to the Mg(2+) site. The KH domain occupies 555 to 614 (PKIIQIQIDPQKIGDVVGQRGKTINAIIEQTGVKIDINDEGAVSVCGTDKDMMDKAINMI). Residues 624 to 692 (GQVFEGKVIS…KMGRISFSIK (69 aa)) form the S1 motif domain.

Belongs to the polyribonucleotide nucleotidyltransferase family. It depends on Mg(2+) as a cofactor.

The protein resides in the cytoplasm. The enzyme catalyses RNA(n+1) + phosphate = RNA(n) + a ribonucleoside 5'-diphosphate. Involved in mRNA degradation. Catalyzes the phosphorolysis of single-stranded polyribonucleotides processively in the 3'- to 5'-direction. This chain is Polyribonucleotide nucleotidyltransferase, found in Lachnoclostridium phytofermentans (strain ATCC 700394 / DSM 18823 / ISDg) (Clostridium phytofermentans).